The following is a 368-amino-acid chain: C2H2 type master regulator of conidiophore development BrlA (368 aa).

The C2H2-type 1; degenerate zinc finger occupies 268–292 (CKCDYPGCHKAFRRNEHLKRHKQTF). The C2H2-type 2 zinc-finger motif lies at 300–323 (FSCEFCGKDQFNRQDNLNNHRKLH). A disordered region spans residues 338-368 (AAVPIIEQEERSRKRRAPPKSKSADKRVDDY). A compositionally biased stretch (basic and acidic residues) spans 359-368 (KSADKRVDDY).

It is found in the nucleus. Functionally, brlA, abaA and wetA are pivotal regulators of conidiophore development and conidium maturation. They act individually and together to regulate their own expression and that of numerous other sporulation-specific genes. BrlA, abaA and wetA act together to positively regulate the expression of the Pks1 gene cluster that mediates the biosynthesis of an anthraquinone derivative pigment that contributes to conidial pigmentation that provides protection from UV radiation, heat and cold stress. This is C2H2 type master regulator of conidiophore development BrlA from Metarhizium robertsii (strain ARSEF 23 / ATCC MYA-3075) (Metarhizium anisopliae (strain ARSEF 23)).